A 485-amino-acid polypeptide reads, in one-letter code: Glutamyl-tRNA(Gln) amidotransferase subunit A (485 aa).

Catalysis depends on charge relay system residues K79 and S154. The active-site Acyl-ester intermediate is the S178.

This sequence belongs to the amidase family. GatA subfamily. Heterotrimer of A, B and C subunits.

It catalyses the reaction L-glutamyl-tRNA(Gln) + L-glutamine + ATP + H2O = L-glutaminyl-tRNA(Gln) + L-glutamate + ADP + phosphate + H(+). Functionally, allows the formation of correctly charged Gln-tRNA(Gln) through the transamidation of misacylated Glu-tRNA(Gln) in organisms which lack glutaminyl-tRNA synthetase. The reaction takes place in the presence of glutamine and ATP through an activated gamma-phospho-Glu-tRNA(Gln). The protein is Glutamyl-tRNA(Gln) amidotransferase subunit A of Staphylococcus aureus (strain USA300 / TCH1516).